Reading from the N-terminus, the 190-residue chain is Pyridoxamine 5'-phosphate oxidase C1952.08c homolog (190 aa).

S62 and K69 together coordinate FMN.

The protein belongs to the pyridoxamine 5'-phosphate oxidase family. FMN serves as cofactor.

It localises to the cytoplasm. It is found in the nucleus. The sequence is that of Pyridoxamine 5'-phosphate oxidase C1952.08c homolog from Schizosaccharomyces pombe (strain 972 / ATCC 24843) (Fission yeast).